The following is a 468-amino-acid chain: UDP-N-acetylmuramate--L-alanine ligase (468 aa).

112 to 118 (GTHGKTT) serves as a coordination point for ATP.

Belongs to the MurCDEF family.

It is found in the cytoplasm. It catalyses the reaction UDP-N-acetyl-alpha-D-muramate + L-alanine + ATP = UDP-N-acetyl-alpha-D-muramoyl-L-alanine + ADP + phosphate + H(+). It functions in the pathway cell wall biogenesis; peptidoglycan biosynthesis. In terms of biological role, cell wall formation. This chain is UDP-N-acetylmuramate--L-alanine ligase, found in Neisseria meningitidis serogroup C (strain 053442).